The primary structure comprises 368 residues: DNA replication and repair protein RecF (368 aa).

30–37 (GRNGSGKT) provides a ligand contact to ATP.

It belongs to the RecF family.

The protein resides in the cytoplasm. In terms of biological role, the RecF protein is involved in DNA metabolism; it is required for DNA replication and normal SOS inducibility. RecF binds preferentially to single-stranded, linear DNA. It also seems to bind ATP. In Chlorobaculum tepidum (strain ATCC 49652 / DSM 12025 / NBRC 103806 / TLS) (Chlorobium tepidum), this protein is DNA replication and repair protein RecF.